The chain runs to 138 residues: Large ribosomal subunit protein uL16 (138 aa).

Over residues Met1 to Gln13 the composition is skewed to basic residues. Residues Met1–Ile20 are disordered.

This sequence belongs to the universal ribosomal protein uL16 family. As to quaternary structure, part of the 50S ribosomal subunit.

Binds 23S rRNA and is also seen to make contacts with the A and possibly P site tRNAs. This is Large ribosomal subunit protein uL16 from Burkholderia mallei (strain NCTC 10247).